A 115-amino-acid polypeptide reads, in one-letter code: Ribonuclease P protein component (115 aa).

Belongs to the RnpA family. In terms of assembly, consists of a catalytic RNA component (M1 or rnpB) and a protein subunit.

The catalysed reaction is Endonucleolytic cleavage of RNA, removing 5'-extranucleotides from tRNA precursor.. In terms of biological role, RNaseP catalyzes the removal of the 5'-leader sequence from pre-tRNA to produce the mature 5'-terminus. It can also cleave other RNA substrates such as 4.5S RNA. The protein component plays an auxiliary but essential role in vivo by binding to the 5'-leader sequence and broadening the substrate specificity of the ribozyme. This is Ribonuclease P protein component from Blochmanniella pennsylvanica (strain BPEN).